A 916-amino-acid polypeptide reads, in one-letter code: Calcium homeostasis endoplasmic reticulum protein (916 aa).

Methionine 1 is modified (N-acetylmethionine). Residues 15–57 (VIDKLAQFVARNGPEFEKMTMEKQKDNPKFSFLFGGEFYSYYK) form an SURP motif repeat. Lysine 18 bears the N6-acetyllysine mark. Positions 149 to 289 (ETQLDMNEFD…QLQSPALGLG (141 aa)) constitute a CID domain. Disordered stretches follow at residues 336-549 (QQQQ…RFPP) and 601-635 (HPPW…PHIN). A compositionally biased stretch (pro residues) spans 354-374 (TPPPPAPPPAPAPAPAIPPTT). The span at 480 to 501 (WNNQPDAAWNSQFEGPWNSQHE) shows a compositional bias: polar residues. Pro residues predominate over residues 525-541 (PFPPHQQHPQFNQPPHP). Tyrosine 714 carries the phosphotyrosine modification. The segment at 722 to 878 (RARRRKGQEK…DPIKGGDVRD (157 aa)) is disordered. Residues 739–749 (SRSRSKSRGRS) show a composition bias toward basic residues. The span at 750–766 (SSRSNSRSSKSSGSYSR) shows a compositional bias: low complexity. Positions 767–815 (SRSRSCSRSYSRSRSRSRSRSRSSRSRSRSQSRSRSKSYSPGRRRRSRS) are enriched in basic residues. 3 positions are modified to phosphoserine: serine 813, serine 815, and serine 817. At threonine 819 the chain carries Phosphothreonine. Serine 828 bears the Phosphoserine mark. A G-patch domain is found at 841–891 (EENKGHQMLVKMGWSGSGGLGAKEQGIQDPIKGGDVRDKWDQYKGVGVALD). Residue lysine 844 forms a Glycyl lysine isopeptide (Lys-Gly) (interchain with G-Cter in SUMO2) linkage. Serine 855 and serine 857 each carry phosphoserine. A Glycyl lysine isopeptide (Lys-Gly) (interchain with G-Cter in SUMO2) cross-link involves residue lysine 872. Position 879 is an N6-acetyllysine (lysine 879). A Phosphoserine modification is found at serine 904.

In terms of tissue distribution, expressed in brain, placenta, lung, liver, kidney, pancreas, cardiac and skeletal muscle, and in cultured HEL and Dami cells.

Its subcellular location is the cytoplasm. It localises to the perinuclear region. The protein resides in the endoplasmic reticulum. Involved in calcium homeostasis, growth and proliferation. The protein is Calcium homeostasis endoplasmic reticulum protein of Homo sapiens (Human).